We begin with the raw amino-acid sequence, 353 residues long: Photosystem II D2 protein (353 aa).

An N-acetylthreonine modification is found at Thr-2. A Phosphothreonine modification is found at Thr-2. A helical membrane pass occupies residues 41 to 61 (CAYFALGGWFTGTTFVTSWYT). Position 118 (His-118) interacts with chlorophyll a. The chain crosses the membrane as a helical span at residues 125 to 141 (GFMLRQFELSRSVQLRP). The pheophytin a site is built by Gln-130 and Asn-143. Residues 153 to 166 (VFVSVFLIYPLGQS) traverse the membrane as a helical segment. Residue His-198 participates in chlorophyll a binding. Residues 208 to 228 (AALLCAIHGATVENTLFEDGD) traverse the membrane as a helical segment. A plastoquinone contacts are provided by His-215 and Phe-262. Position 215 (His-215) interacts with Fe cation. Residue His-269 participates in Fe cation binding. The chain crosses the membrane as a helical span at residues 279 to 295 (GLWMSALGVVGLALNLR).

Belongs to the reaction center PufL/M/PsbA/D family. In terms of assembly, PSII is composed of 1 copy each of membrane proteins PsbA, PsbB, PsbC, PsbD, PsbE, PsbF, PsbH, PsbI, PsbJ, PsbK, PsbL, PsbM, PsbT, PsbX, PsbY, PsbZ, Psb30/Ycf12, at least 3 peripheral proteins of the oxygen-evolving complex and a large number of cofactors. It forms dimeric complexes. The D1/D2 heterodimer binds P680, chlorophylls that are the primary electron donor of PSII, and subsequent electron acceptors. It shares a non-heme iron and each subunit binds pheophytin, quinone, additional chlorophylls, carotenoids and lipids. There is also a Cl(-1) ion associated with D1 and D2, which is required for oxygen evolution. The PSII complex binds additional chlorophylls, carotenoids and specific lipids. is required as a cofactor.

Its subcellular location is the plastid. It localises to the chloroplast thylakoid membrane. The enzyme catalyses 2 a plastoquinone + 4 hnu + 2 H2O = 2 a plastoquinol + O2. Photosystem II (PSII) is a light-driven water:plastoquinone oxidoreductase that uses light energy to abstract electrons from H(2)O, generating O(2) and a proton gradient subsequently used for ATP formation. It consists of a core antenna complex that captures photons, and an electron transfer chain that converts photonic excitation into a charge separation. The D1/D2 (PsbA/PsbD) reaction center heterodimer binds P680, the primary electron donor of PSII as well as several subsequent electron acceptors. D2 is needed for assembly of a stable PSII complex. The sequence is that of Photosystem II D2 protein from Arabis hirsuta (Hairy rock-cress).